We begin with the raw amino-acid sequence, 144 residues long: D-aminoacyl-tRNA deacylase (144 aa).

The Gly-cisPro motif, important for rejection of L-amino acids signature appears at 136–137 (GP).

The protein belongs to the DTD family. In terms of assembly, homodimer.

It localises to the cytoplasm. The catalysed reaction is glycyl-tRNA(Ala) + H2O = tRNA(Ala) + glycine + H(+). The enzyme catalyses a D-aminoacyl-tRNA + H2O = a tRNA + a D-alpha-amino acid + H(+). An aminoacyl-tRNA editing enzyme that deacylates mischarged D-aminoacyl-tRNAs. Also deacylates mischarged glycyl-tRNA(Ala), protecting cells against glycine mischarging by AlaRS. Acts via tRNA-based rather than protein-based catalysis; rejects L-amino acids rather than detecting D-amino acids in the active site. By recycling D-aminoacyl-tRNA to D-amino acids and free tRNA molecules, this enzyme counteracts the toxicity associated with the formation of D-aminoacyl-tRNA entities in vivo and helps enforce protein L-homochirality. This is D-aminoacyl-tRNA deacylase from Vibrio vulnificus (strain CMCP6).